The sequence spans 145 residues: Large ribosomal subunit protein bL9 (145 aa).

Belongs to the bacterial ribosomal protein bL9 family.

In terms of biological role, binds to the 23S rRNA. This chain is Large ribosomal subunit protein bL9, found in Ureaplasma parvum serovar 3 (strain ATCC 700970).